A 365-amino-acid polypeptide reads, in one-letter code: 3-dehydroquinate synthase (365 aa).

NAD(+) is bound by residues 95–99 (GVVGD), 119–120 (TT), Lys-132, and Lys-141. Glu-174, His-238, and His-255 together coordinate Zn(2+).

This sequence belongs to the sugar phosphate cyclases superfamily. Dehydroquinate synthase family. Co(2+) serves as cofactor. Requires Zn(2+) as cofactor. It depends on NAD(+) as a cofactor.

Its subcellular location is the cytoplasm. The catalysed reaction is 7-phospho-2-dehydro-3-deoxy-D-arabino-heptonate = 3-dehydroquinate + phosphate. The protein operates within metabolic intermediate biosynthesis; chorismate biosynthesis; chorismate from D-erythrose 4-phosphate and phosphoenolpyruvate: step 2/7. Its function is as follows. Catalyzes the conversion of 3-deoxy-D-arabino-heptulosonate 7-phosphate (DAHP) to dehydroquinate (DHQ). The protein is 3-dehydroquinate synthase of Chlorobium chlorochromatii (strain CaD3).